The primary structure comprises 251 residues: Imidazole glycerol phosphate synthase subunit HisF (251 aa).

Catalysis depends on residues Asp-12 and Asp-131.

This sequence belongs to the HisA/HisF family. As to quaternary structure, heterodimer of HisH and HisF.

It is found in the cytoplasm. The enzyme catalyses 5-[(5-phospho-1-deoxy-D-ribulos-1-ylimino)methylamino]-1-(5-phospho-beta-D-ribosyl)imidazole-4-carboxamide + L-glutamine = D-erythro-1-(imidazol-4-yl)glycerol 3-phosphate + 5-amino-1-(5-phospho-beta-D-ribosyl)imidazole-4-carboxamide + L-glutamate + H(+). The protein operates within amino-acid biosynthesis; L-histidine biosynthesis; L-histidine from 5-phospho-alpha-D-ribose 1-diphosphate: step 5/9. Functionally, IGPS catalyzes the conversion of PRFAR and glutamine to IGP, AICAR and glutamate. The HisF subunit catalyzes the cyclization activity that produces IGP and AICAR from PRFAR using the ammonia provided by the HisH subunit. The chain is Imidazole glycerol phosphate synthase subunit HisF from Streptomyces avermitilis (strain ATCC 31267 / DSM 46492 / JCM 5070 / NBRC 14893 / NCIMB 12804 / NRRL 8165 / MA-4680).